Reading from the N-terminus, the 2113-residue chain is Unconventional myosin-VIIb (2113 aa).

The region spanning 65-760 is the Myosin motor domain; the sequence is QGVDDMIRLG…QDTVLEIRRS (696 aa). Residue 158 to 165 coordinates ATP; it reads GESGAGKT. The tract at residues 637 to 659 is actin-binding; sequence LDQLMRILTNCQPYFVRCIKPNE. IQ domains lie at 745-765, 763-792, 786-815, 809-838, 832-861, and 855-884; these read IFLKDHQDTVLEIRRSQALDG, LDGAAIRIQRVLRGHKYRKEFLRQRRAAVT, QRRAAVTLQAGWRGYSQRKNFKLILVGFER, ILVGFERLQAIARSHLLMRQFQAMRQRIVQ, MRQRIVQLQARCRGYLVRQQVQAKRRAVVI, and KRRAVVIIQAHARGMVVRKSYWQQKSTGPQ. Serine 904 bears the Phosphoserine mark. The interval 962–1578 is mediates interaction with ANKS4B; sequence EEEVDSLAEY…STQLLSLLAM (617 aa). The MyTH4 1 domain occupies 989 to 1189; it reads HIQKPLRYPL…PTWLELQAVK (201 aa). An FERM 1 domain is found at 1194-1503; it reads IPIQVILATG…GGLKERSVFA (310 aa). Phosphothreonine is present on threonine 1339. Residue serine 1368 is modified to Phosphoserine. A mediates interaction with CDHR2, CDHR5 and USH1C region spans residues 1497 to 2113; the sequence is KERSVFAMAL…GFRAPAPANP (617 aa). Residues 1498–1564 form the SH3 domain; the sequence is ERSVFAMALQ…PTACLYTIPS (67 aa). MyTH4 domains lie at 1641-1790 and 1790-1896; these read YSPE…KAAE and EQNV…LNVT. Phosphoserine is present on serine 1642. The region spanning 1796-2099 is the FERM 2 domain; sequence LHHEVYLPND…SYVQQLLNTV (304 aa).

It belongs to the TRAFAC class myosin-kinesin ATPase superfamily. Myosin family. In terms of assembly, part of the IMAC/intermicrovillar adhesion complex/intermicrovillar tip-link complex composed of ANKS4B, MYO7B, USH1C, CDHR2 and CDHR5. Interacts with CDHR2. Interacts with CDHR5. Interacts with USH1C. Interacts with ANKS4B; requires initial interaction with USH1C. Interacts with CALML4; the interaction mediates the association of CALML4 with the IMAC/intermicrovillar adhesion complex. Expressed primarily in kidney and intestine. Detected in proximal tubule cells of the kidney and enterocytes of the intestine, specifically the distal tips of apical microvilli on these transporting epithelial cells (at protein level).

It is found in the cytoplasm. The protein resides in the cytoskeleton. The protein localises to the cell projection. Its subcellular location is the microvillus. In terms of biological role, myosins are actin-based motor molecules with ATPase activity. Their highly divergent tails are presumed to bind to membranous compartments, which would be moved relative to actin filaments. As part of the intermicrovillar adhesion complex/IMAC plays a role in epithelial brush border differentiation, controlling microvilli organization and length. May link the complex to the actin core bundle of microvilli. This Mus musculus (Mouse) protein is Unconventional myosin-VIIb (Myo7b).